The primary structure comprises 486 residues: CUGBP Elav-like family member 5 (486 aa).

The span at 1-11 (MARLTEREARR) shows a compositional bias: basic and acidic residues. Positions 1-39 (MARLTEREARRQQQQHPPQQQQPRACPMSGPEPPAQQSD) are disordered. Positions 12–24 (QQQQHPPQQQQPR) are enriched in low complexity. 3 RRM domains span residues 47 to 128 (IKLF…PADS), 135 to 215 (RKLF…FADT), and 401 to 479 (CNLF…LKRP).

It belongs to the CELF/BRUNOL family.

The protein resides in the nucleus. It is found in the cytoplasm. In terms of biological role, RNA-binding protein that may be implicated in the regulation of pre-mRNA alternative splicing. The chain is CUGBP Elav-like family member 5 (celf5) from Xenopus tropicalis (Western clawed frog).